The primary structure comprises 83 residues: MYB-like transcription factor ETC1 (83 aa).

Residues 35–72 form the Myb-like domain; sequence AQEEEDLICRMYKLVGERWDLIAGRIPGRTAEEIERFW.

In terms of tissue distribution, expressed in developing trichomes and non-root hair cells.

It is found in the nucleus. In terms of biological role, MYB-type transcription factor involved in epidermal cell fate specification. Acts as a negative regulator of trichome development, by mediating lateral inhibition. Promotes the formation of hair developing cells in H position in root epidermis, probably by inhibiting non-hair cell formation. The sequence is that of MYB-like transcription factor ETC1 (ETC1) from Arabidopsis thaliana (Mouse-ear cress).